The primary structure comprises 220 residues: Imidazoleglycerol-phosphate dehydratase (220 aa).

Residues Glu14, 64 to 72, 90 to 94, Arg116, and Arg138 contribute to the substrate site; these read HMIHALAKH and HHTTE. Mn(2+)-binding residues include His64, His90, His91, and Glu94. 4 residues coordinate Mn(2+): His162, His186, His187, and Glu190. Substrate-binding positions include 186-194 and 214-216; these read HHRSESAFK and STK.

Belongs to the imidazoleglycerol-phosphate dehydratase family. The cofactor is Mn(2+).

The catalysed reaction is D-erythro-1-(imidazol-4-yl)glycerol 3-phosphate = 3-(imidazol-4-yl)-2-oxopropyl phosphate + H2O. The protein operates within amino-acid biosynthesis; L-histidine biosynthesis; L-histidine from 5-phospho-alpha-D-ribose 1-diphosphate: step 6/9. In Saccharomyces cerevisiae (strain ATCC 204508 / S288c) (Baker's yeast), this protein is Imidazoleglycerol-phosphate dehydratase.